The following is a 437-amino-acid chain: UDP-N-acetylmuramate--L-alanine ligase (437 aa).

G114–S120 serves as a coordination point for ATP.

The protein belongs to the MurCDEF family.

Its subcellular location is the cytoplasm. The enzyme catalyses UDP-N-acetyl-alpha-D-muramate + L-alanine + ATP = UDP-N-acetyl-alpha-D-muramoyl-L-alanine + ADP + phosphate + H(+). It participates in cell wall biogenesis; peptidoglycan biosynthesis. In terms of biological role, cell wall formation. This Lactobacillus johnsonii (strain CNCM I-12250 / La1 / NCC 533) protein is UDP-N-acetylmuramate--L-alanine ligase.